The chain runs to 115 residues: uncharacterized protein (115 aa).

Residues 36–56 (SFFSLGLIACFCIFLIIVLSE) traverse the membrane as a helical segment.

Its subcellular location is the membrane. This is an uncharacterized protein from Saccharomyces cerevisiae (strain ATCC 204508 / S288c) (Baker's yeast).